We begin with the raw amino-acid sequence, 855 residues long: DNA mismatch repair protein MutS (855 aa).

616-623 provides a ligand contact to ATP; sequence GPNMGGKS.

This sequence belongs to the DNA mismatch repair MutS family.

This protein is involved in the repair of mismatches in DNA. It is possible that it carries out the mismatch recognition step. This protein has a weak ATPase activity. In Salmonella dublin (strain CT_02021853), this protein is DNA mismatch repair protein MutS.